Consider the following 306-residue polypeptide: GTPase IMAP family member 1 (306 aa).

Positions 1–21 (MGGRKMATDEENVYGLEENAQ) are disordered. The Cytoplasmic segment spans residues 1–272 (MGGRKMATDE…RLWKWLKSPR (272 aa)). In terms of domain architecture, AIG1-type G spans 25–229 (ESTRRLILVG…YSNEVYELAQ (205 aa)). The G1 stretch occupies residues 34–41 (GRTGAGKS). GTP is bound by residues 34–42 (GRTGAGKSA) and Ser-55. Positions 61–65 (SVTRA) are G2. Residues 82–85 (DTPD) form a G3 region. Residues 152–155 (TRKE) are G4. GTP-binding positions include 153–155 (RKE) and Asn-190. Residues 189 to 191 (DNR) are G5. A helical; Anchor for type IV membrane protein transmembrane segment spans residues 273–292 (SWRLGLALLLGGALLFWVLL). At 293–306 (HRRWSEAVAEVGPD) the chain is on the lumenal side.

This sequence belongs to the TRAFAC class TrmE-Era-EngA-EngB-Septin-like GTPase superfamily. AIG1/Toc34/Toc159-like paraseptin GTPase family. IAN subfamily. In terms of tissue distribution, predominantly expressed in the spleen and to a lesser extent in the lymph nodes. Detected in T-cells.

It is found in the endoplasmic reticulum membrane. It localises to the golgi apparatus membrane. Functionally, may regulate lymphocyte survival. Required for normal levels of mature T-lymphocytes and mature B-cells. This chain is GTPase IMAP family member 1 (GIMAP1), found in Homo sapiens (Human).